Reading from the N-terminus, the 668-residue chain is Eukaryotic translation initiation factor 3 subunit L (668 aa).

A compositionally biased stretch (polar residues) spans methionine 1 to asparagine 17. The disordered stretch occupies residues methionine 1–glutamate 42. A compositionally biased stretch (low complexity) spans glutamine 18–glycine 32. Acidic residues predominate over residues glycine 33–glutamate 42. Residues serine 358–phenylalanine 552 enclose the PCI domain. The disordered stretch occupies residues alanine 625–alanine 668. The span at lysine 648–proline 662 shows a compositional bias: low complexity.

It belongs to the eIF-3 subunit L family. As to quaternary structure, component of the eukaryotic translation initiation factor 3 (eIF-3) complex.

It localises to the cytoplasm. Functionally, component of the eukaryotic translation initiation factor 3 (eIF-3) complex, which is involved in protein synthesis of a specialized repertoire of mRNAs and, together with other initiation factors, stimulates binding of mRNA and methionyl-tRNAi to the 40S ribosome. The eIF-3 complex specifically targets and initiates translation of a subset of mRNAs involved in cell proliferation. This Mycosarcoma maydis (Corn smut fungus) protein is Eukaryotic translation initiation factor 3 subunit L.